The primary structure comprises 556 residues: Phenylalanine--tRNA ligase beta subunit (556 aa).

The 76-residue stretch at 278–353 (LTPKEFEVEL…IAYGYNNIEP (76 aa)) folds into the B5 domain. The Mg(2+) site is built by D331, D337, E340, and D341.

The protein belongs to the phenylalanyl-tRNA synthetase beta subunit family. Type 2 subfamily. Tetramer of two alpha and two beta subunits. The cofactor is Mg(2+).

Its subcellular location is the cytoplasm. It catalyses the reaction tRNA(Phe) + L-phenylalanine + ATP = L-phenylalanyl-tRNA(Phe) + AMP + diphosphate + H(+). This Pyrococcus horikoshii (strain ATCC 700860 / DSM 12428 / JCM 9974 / NBRC 100139 / OT-3) protein is Phenylalanine--tRNA ligase beta subunit.